Here is a 138-residue protein sequence, read N- to C-terminus: RutC family protein UK114 (138 aa).

It belongs to the RutC family.

Molecular chaperone. Seems to fulfill an ATP-independent, HSP70-like function in protein folding. May protect essential factors of cell proliferation during heat shock. No role in calpain activation. In Drosophila melanogaster (Fruit fly), this protein is RutC family protein UK114.